A 405-amino-acid polypeptide reads, in one-letter code: Acetylornithine aminotransferase 2 (405 aa).

Residues 105 to 106 and phenylalanine 138 each bind pyridoxal 5'-phosphate; that span reads GT. Position 141 (arginine 141) interacts with N(2)-acetyl-L-ornithine. 224-227 is a pyridoxal 5'-phosphate binding site; that stretch reads DEVQ. Residue lysine 254 is modified to N6-(pyridoxal phosphate)lysine. Residue serine 282 participates in N(2)-acetyl-L-ornithine binding. Threonine 283 provides a ligand contact to pyridoxal 5'-phosphate.

It belongs to the class-III pyridoxal-phosphate-dependent aminotransferase family. ArgD subfamily. Homodimer. Requires pyridoxal 5'-phosphate as cofactor.

It is found in the cytoplasm. The enzyme catalyses N(2)-acetyl-L-ornithine + 2-oxoglutarate = N-acetyl-L-glutamate 5-semialdehyde + L-glutamate. Its pathway is amino-acid biosynthesis; L-arginine biosynthesis; N(2)-acetyl-L-ornithine from L-glutamate: step 4/4. This is Acetylornithine aminotransferase 2 from Caulobacter vibrioides (strain ATCC 19089 / CIP 103742 / CB 15) (Caulobacter crescentus).